A 499-amino-acid polypeptide reads, in one-letter code: MHIPIPMVQISEAEYRVLRAIQSRGATAIESELSVEGLSDREIASAISWLEVKGLLDVERREIKTYALSSEGKRYLREGLPELVLYRKLKERGEMTMDEIRDLMPDTYRIALAQLAKFGITPKEGKLIYRNSGIEAAIEERQRFLQSMDPKNTAMIDHFRHRSGVIDEKIRTERIVRLNDSAYEAIAEFGGEGLIGSLDPSIIASGEWKTKNFRKYDLNSPSSVIRSSLKHPMTYLIEEIREIFLNMGFTEMGGHYIESTLWDMDSLFIPQDHPARDMQDTFYVEADSFDIDHPEISKKIRKIHEKGFDGYSGWGYRWSDAEARKLVLRTHTTVSTARYLYENNEPPQAIFSVEKVFRHESVDWKHLAEFYQIEGAVYSKDVSVSTLKWILRDFYAKLGFNDIKLIPSYYPYTEPSLDVVVRVNGKEVELGGSGLFRPEVLKILGLKAPVMAWGMGLERLAMMYYGLTDVRDLYNTDFEFLSSFRFNISRNGRNNYGKA.

L-phenylalanine contacts are provided by residues Thr333, 372–374, and Tyr412; that span reads QIE. Glu414 is a binding site for Mg(2+). Residue Phe436 participates in L-phenylalanine binding.

The protein belongs to the class-II aminoacyl-tRNA synthetase family. Phe-tRNA synthetase alpha subunit type 2 subfamily. As to quaternary structure, tetramer of two alpha and two beta subunits. Mg(2+) is required as a cofactor.

The protein localises to the cytoplasm. The enzyme catalyses tRNA(Phe) + L-phenylalanine + ATP = L-phenylalanyl-tRNA(Phe) + AMP + diphosphate + H(+). The chain is Phenylalanine--tRNA ligase alpha subunit from Thermoplasma acidophilum (strain ATCC 25905 / DSM 1728 / JCM 9062 / NBRC 15155 / AMRC-C165).